The following is a 119-amino-acid chain: Putative membrane protein insertion efficiency factor (119 aa).

The protein belongs to the UPF0161 family.

The protein localises to the cell inner membrane. Functionally, could be involved in insertion of integral membrane proteins into the membrane. This Agrobacterium fabrum (strain C58 / ATCC 33970) (Agrobacterium tumefaciens (strain C58)) protein is Putative membrane protein insertion efficiency factor.